We begin with the raw amino-acid sequence, 186 residues long: ATP synthase subunit delta (186 aa).

The protein belongs to the ATPase delta chain family. As to quaternary structure, F-type ATPases have 2 components, F(1) - the catalytic core - and F(0) - the membrane proton channel. F(1) has five subunits: alpha(3), beta(3), gamma(1), delta(1), epsilon(1). CF(0) has four main subunits: a(1), b(1), b'(1) and c(10-14). The alpha and beta chains form an alternating ring which encloses part of the gamma chain. F(1) is attached to F(0) by a central stalk formed by the gamma and epsilon chains, while a peripheral stalk is formed by the delta, b and b' chains.

The protein localises to the cell inner membrane. Functionally, f(1)F(0) ATP synthase produces ATP from ADP in the presence of a proton or sodium gradient. F-type ATPases consist of two structural domains, F(1) containing the extramembraneous catalytic core and F(0) containing the membrane proton channel, linked together by a central stalk and a peripheral stalk. During catalysis, ATP synthesis in the catalytic domain of F(1) is coupled via a rotary mechanism of the central stalk subunits to proton translocation. Its function is as follows. This protein is part of the stalk that links CF(0) to CF(1). It either transmits conformational changes from CF(0) to CF(1) or is implicated in proton conduction. The chain is ATP synthase subunit delta from Bradyrhizobium sp. (strain BTAi1 / ATCC BAA-1182).